The sequence spans 71 residues: uncharacterized protein (71 aa).

Residues 1 to 23 (MTLLIILILKYLLCLENLKNISL) form the signal peptide. N-linked (GlcNAc...) asparagine glycans are attached at residues N20, N28, N44, and N50.

Its subcellular location is the secreted. This is an uncharacterized protein from Dictyostelium discoideum (Social amoeba).